A 143-amino-acid chain; its full sequence is Endoribonuclease YbeY (143 aa).

Positions 109, 113, and 119 each coordinate Zn(2+).

The protein belongs to the endoribonuclease YbeY family. Zn(2+) serves as cofactor.

The protein resides in the cytoplasm. Single strand-specific metallo-endoribonuclease involved in late-stage 70S ribosome quality control and in maturation of the 3' terminus of the 16S rRNA. The polypeptide is Endoribonuclease YbeY (Carboxydothermus hydrogenoformans (strain ATCC BAA-161 / DSM 6008 / Z-2901)).